Reading from the N-terminus, the 406-residue chain is Digeranylgeranylglycerophospholipid reductase 2 (406 aa).

Residues G15, E34, C45, A46, G48, R99, A123, D279, G291, and I292 each contribute to the FAD site.

The protein belongs to the geranylgeranyl reductase family. DGGGPL reductase subfamily. FAD is required as a cofactor.

It catalyses the reaction a 2,3-bis-O-phytanyl-sn-glycerol 1-phospholipid + 8 oxidized 2[4Fe-4S]-[ferredoxin] = a 2,3-bis-O-(geranylgeranyl)-sn-glycerol 1-phospholipid + 8 reduced 2[4Fe-4S]-[ferredoxin] + 16 H(+). The enzyme catalyses 2,3-bis-O-(phytanyl)-sn-glycerol 1-phosphate + 8 oxidized 2[4Fe-4S]-[ferredoxin] = 2,3-bis-O-(geranylgeranyl)-sn-glycerol 1-phosphate + 8 reduced 2[4Fe-4S]-[ferredoxin] + 16 H(+). The catalysed reaction is a 2,3-bis-O-phytanyl-sn-glycerol 1-phospholipid + 8 A = a 2,3-bis-O-(geranylgeranyl)-sn-glycerol 1-phospholipid + 8 AH2. It carries out the reaction CDP-2,3-bis-O-(geranylgeranyl)-sn-glycerol + 8 AH2 = CDP-2,3-bis-O-(phytanyl)-sn-glycerol + 8 A. It catalyses the reaction archaetidylserine + 8 AH2 = 2,3-bis-O-phytanyl-sn-glycero-3-phospho-L-serine + 8 A. It functions in the pathway membrane lipid metabolism; glycerophospholipid metabolism. Its function is as follows. Is involved in the reduction of 2,3-digeranylgeranylglycerophospholipids (unsaturated archaeols) into 2,3-diphytanylglycerophospholipids (saturated archaeols) in the biosynthesis of archaeal membrane lipids. Catalyzes the formation of archaetidic acid (2,3-di-O-phytanyl-sn-glyceryl phosphate) from 2,3-di-O-geranylgeranylglyceryl phosphate (DGGGP) via the hydrogenation of each double bond of the isoprenoid chains. Is also probably able to reduce double bonds of geranyl groups in CDP-2,3-bis-O-(geranylgeranyl)-sn-glycerol and archaetidylserine, thus acting at various stages in the biosynthesis of archaeal membrane lipids. The chain is Digeranylgeranylglycerophospholipid reductase 2 from Methanococcoides burtonii (strain DSM 6242 / NBRC 107633 / OCM 468 / ACE-M).